The chain runs to 136 residues: Putative zinc finger protein 818 (136 aa).

The C2H2-type 1; degenerate zinc finger occupies 64 to 83 (NVCGKVLSQNSHLVNHQRIH). Residues 89 to 111 (YRCHECGKAFTQGSRFINHQIVH) form a C2H2-type 2 zinc finger.

Belongs to the krueppel C2H2-type zinc-finger protein family.

It localises to the nucleus. Its function is as follows. May be involved in transcriptional regulation. The sequence is that of Putative zinc finger protein 818 (ZNF818P) from Homo sapiens (Human).